Reading from the N-terminus, the 461-residue chain is L-cystine uptake protein TcyP (461 aa).

10 helical membrane passes run 1–21 (MTLF…LLYM), 33–53 (VFTA…IYGS), 72–92 (YVKL…LGAF), 104–124 (ISGL…AVGI), 183–203 (PTST…YLGV), 224–244 (IIMR…LAIM), 262–282 (FVIA…LLIT), 337–357 (LSIG…IMIA), 369–389 (FLFT…GVGG), and 393–413 (FAAL…GLLI).

This sequence belongs to the dicarboxylate/amino acid:cation symporter (DAACS) (TC 2.A.23) family.

Its subcellular location is the membrane. Mediates uptake of L-cystine, the oxidized form of L-cysteine. This is L-cystine uptake protein TcyP (tcyP) from Bacillus licheniformis (strain ATCC 14580 / DSM 13 / JCM 2505 / CCUG 7422 / NBRC 12200 / NCIMB 9375 / NCTC 10341 / NRRL NRS-1264 / Gibson 46).